Reading from the N-terminus, the 263-residue chain is N-acyl homoserine lactonase AttM (263 aa).

Zn(2+)-binding residues include H103, H105, D107, H108, H180, D202, and H247.

It belongs to the metallo-beta-lactamase superfamily. Zn(2+) is required as a cofactor.

It carries out the reaction an N-acyl-L-homoserine lactone + H2O = an N-acyl-L-homoserine + H(+). The chain is N-acyl homoserine lactonase AttM (attM) from Rhizobium radiobacter (Agrobacterium tumefaciens).